The sequence spans 244 residues: Mediator of RNA polymerase II transcription subunit 9 (244 aa).

A compositionally biased stretch (gly residues) spans 1–10; it reads MDQFSGGGGN. 2 disordered regions span residues 1 to 28 and 96 to 131; these read MDQF…TPTN and QQRL…HTPQ. Over residues 13-28 the composition is skewed to polar residues; sequence MIPNVQAQGNFGTPTN. Low complexity-rich tracts occupy residues 96 to 111 and 122 to 131; these read QQRL…QSLQ and TPQSMMHTPQ. Residues 212–239 adopt a coiled-coil conformation; sequence KRNVEESEQLLQQRRDLIVEYRKSIEEI.

This sequence belongs to the plant Mediator complex subunit 9 family. Component of the Mediator complex. Interacts with MEE14/CBP1.

The protein resides in the nucleus. Component of the Mediator complex, a coactivator involved in the regulated transcription of nearly all RNA polymerase II-dependent genes. Mediator functions as a bridge to convey information from gene-specific regulatory proteins to the basal RNA polymerase II transcription machinery. The Mediator complex, having a compact conformation in its free form, is recruited to promoters by direct interactions with regulatory proteins and serves for the assembly of a functional pre-initiation complex with RNA polymerase II and the general transcription factors. In Arabidopsis thaliana (Mouse-ear cress), this protein is Mediator of RNA polymerase II transcription subunit 9 (MED9).